The following is a 122-amino-acid chain: Large ribosomal subunit protein uL14 (122 aa).

The protein belongs to the universal ribosomal protein uL14 family. In terms of assembly, part of the 50S ribosomal subunit. Forms a cluster with proteins L3 and L19. In the 70S ribosome, L14 and L19 interact and together make contacts with the 16S rRNA in bridges B5 and B8.

Binds to 23S rRNA. Forms part of two intersubunit bridges in the 70S ribosome. This Bartonella bacilliformis (strain ATCC 35685 / KC583 / Herrer 020/F12,63) protein is Large ribosomal subunit protein uL14.